The chain runs to 588 residues: L-fucose isomerase (588 aa).

Catalysis depends on proton acceptor residues glutamate 335 and aspartate 359. The Mn(2+) site is built by glutamate 335, aspartate 359, and histidine 525.

Belongs to the L-fucose isomerase family. Requires Mn(2+) as cofactor.

It localises to the cytoplasm. It catalyses the reaction L-fucose = L-fuculose. It functions in the pathway carbohydrate degradation; L-fucose degradation; L-lactaldehyde and glycerone phosphate from L-fucose: step 1/3. Converts the aldose L-fucose into the corresponding ketose L-fuculose. In Streptococcus pneumoniae (strain Taiwan19F-14), this protein is L-fucose isomerase.